The primary structure comprises 488 residues: Glutamate--tRNA ligase (488 aa).

Residues P16 to T26 carry the 'HIGH' region motif. The 'KMSKS' region motif lies at K257–R261. Residue K260 coordinates ATP.

Belongs to the class-I aminoacyl-tRNA synthetase family. Glutamate--tRNA ligase type 1 subfamily. Monomer.

The protein localises to the cytoplasm. The catalysed reaction is tRNA(Glu) + L-glutamate + ATP = L-glutamyl-tRNA(Glu) + AMP + diphosphate. Catalyzes the attachment of glutamate to tRNA(Glu) in a two-step reaction: glutamate is first activated by ATP to form Glu-AMP and then transferred to the acceptor end of tRNA(Glu). This Rhizobium johnstonii (strain DSM 114642 / LMG 32736 / 3841) (Rhizobium leguminosarum bv. viciae) protein is Glutamate--tRNA ligase.